The sequence spans 370 residues: Glutamate 5-kinase (370 aa).

Lys17 is a binding site for ATP. Substrate-binding residues include Ser57, Asp144, and Asn156. ATP is bound by residues 176 to 177 and 220 to 226; these read SD and TGGMASK. One can recognise a PUA domain in the interval 282–360; it reads AGALTLDDGA…HELPVEMRRP (79 aa).

This sequence belongs to the glutamate 5-kinase family.

It localises to the cytoplasm. It carries out the reaction L-glutamate + ATP = L-glutamyl 5-phosphate + ADP. It functions in the pathway amino-acid biosynthesis; L-proline biosynthesis; L-glutamate 5-semialdehyde from L-glutamate: step 1/2. In terms of biological role, catalyzes the transfer of a phosphate group to glutamate to form L-glutamate 5-phosphate. This is Glutamate 5-kinase from Mycolicibacterium smegmatis (strain ATCC 700084 / mc(2)155) (Mycobacterium smegmatis).